A 155-amino-acid chain; its full sequence is UPF0305 protein MTH_811 (155 aa).

Belongs to the UPF0305 family.

The protein is UPF0305 protein MTH_811 of Methanothermobacter thermautotrophicus (strain ATCC 29096 / DSM 1053 / JCM 10044 / NBRC 100330 / Delta H) (Methanobacterium thermoautotrophicum).